The primary structure comprises 99 residues: UPF0235 protein Sbal_3028 (99 aa).

Belongs to the UPF0235 family.

This chain is UPF0235 protein Sbal_3028, found in Shewanella baltica (strain OS155 / ATCC BAA-1091).